Consider the following 143-residue polypeptide: Small ribosomal subunit protein bS6 (143 aa).

Residues 97 to 143 (DTEQSLIMKSKDEKGDKHERSERRRRDDEEGDVPAATDTDGDNAEAA) form a disordered region. A compositionally biased stretch (basic and acidic residues) spans 105 to 124 (KSKDEKGDKHERSERRRRDD).

Belongs to the bacterial ribosomal protein bS6 family.

In terms of biological role, binds together with bS18 to 16S ribosomal RNA. The chain is Small ribosomal subunit protein bS6 from Xanthomonas oryzae pv. oryzae (strain MAFF 311018).